The following is a 68-amino-acid chain: DNA gyrase inhibitor YacG (68 aa).

Positions 10, 13, 29, and 33 each coordinate Zn(2+). Positions 45–68 (EKRIPSDTELSDSDEWSEEDPLKH) are disordered. Residues 53 to 68 (ELSDSDEWSEEDPLKH) show a composition bias toward acidic residues.

It belongs to the DNA gyrase inhibitor YacG family. Interacts with GyrB. The cofactor is Zn(2+).

Its function is as follows. Inhibits all the catalytic activities of DNA gyrase by preventing its interaction with DNA. Acts by binding directly to the C-terminal domain of GyrB, which probably disrupts DNA binding by the gyrase. This Yersinia pseudotuberculosis serotype O:1b (strain IP 31758) protein is DNA gyrase inhibitor YacG.